We begin with the raw amino-acid sequence, 396 residues long: Stearoyl-[acyl-carrier-protein] 9-desaturase, chloroplastic (396 aa).

The transit peptide at 1 to 33 (MALKLNPFLSQTQKLPSFALPPMASTRSPKFYM) directs the protein to the chloroplast. Fe cation is bound by residues Glu-138, Glu-176, His-179, Glu-229, Glu-262, and His-265.

The protein belongs to the fatty acid desaturase type 2 family. As to quaternary structure, homodimer. Requires Fe(2+) as cofactor. Higher levels in developing seeds than in leaf and root tissues.

It is found in the plastid. The protein localises to the chloroplast. The catalysed reaction is octadecanoyl-[ACP] + 2 reduced [2Fe-2S]-[ferredoxin] + O2 + 2 H(+) = (9Z)-octadecenoyl-[ACP] + 2 oxidized [2Fe-2S]-[ferredoxin] + 2 H2O. It participates in lipid metabolism; fatty acid metabolism. Functionally, converts stearoyl-ACP to oleoyl-ACP by introduction of a cis double bond between carbons 9 and 10 of the acyl chain. This is Stearoyl-[acyl-carrier-protein] 9-desaturase, chloroplastic from Ricinus communis (Castor bean).